The chain runs to 272 residues: Putative hydro-lyase BBta_2883 (272 aa).

This sequence belongs to the D-glutamate cyclase family.

The sequence is that of Putative hydro-lyase BBta_2883 from Bradyrhizobium sp. (strain BTAi1 / ATCC BAA-1182).